Reading from the N-terminus, the 216-residue chain is MDGPERDFNLKVVLISFKKCLTDKGEVLLDHYTASWKGLVRFLNSLGAVFSFISKDVVSKLQIMEHLRSGPQSEHYISLQSMVAYEVSNKLVDRDSRSRPRHPNSGCRTVLRLHRALHWLQLFLEGLRTSSEDARTSTLCSEAYNATLAAYHSWIVRQAVNVAFHALPPRKVFLEAMNMGSSEQAVEMLGEALPFIEQVYDISQKLYAEHSLLDLP.

Positions 56, 60, 108, 112, and 152 each coordinate an N-acylsphingoid base 1-phosphate.

It belongs to the GLTP family.

It is found in the cytoplasm. It localises to the cytosol. Its subcellular location is the golgi apparatus. The protein resides in the trans-Golgi network membrane. The protein localises to the cell membrane. It is found in the endosome membrane. It localises to the nucleus outer membrane. The enzyme catalyses N-(hexadecanoyl)-sphing-4-enine-1-phosphate(in) = N-(hexadecanoyl)-sphing-4-enine-1-phosphate(out). It carries out the reaction N-(9Z-octadecenoyl)-sphing-4-enine-1-phosphate(in) = N-(9Z-octadecenoyl)-sphing-4-enine-1-phosphate(out). Its function is as follows. Mediates the intracellular transfer of ceramide-1-phosphate (C1P) between organelle membranes and the cell membrane. Required for normal structure of the Golgi stacks. Can bind phosphoceramides with a variety of aliphatic chains, but has a preference for lipids with saturated C16:0 or monounsaturated C18:1 aliphatic chains, and is inefficient with phosphoceramides containing lignoceryl (C24:0). Plays a role in the regulation of the cellular levels of ceramide-1-phosphate, and thereby contributes to the regulation of phospholipase PLA2G4A activity and the release of arachidonic acid. Has no activity with galactosylceramide, lactosylceramide, sphingomyelin, phosphatidylcholine, phosphatidic acid and ceramide. C1P transfer is stimulated by phosphatidylserine in C1P source vesicles. Regulates autophagy, inflammasome mediated IL1B and IL18 processing, and pyroptosis, but not apoptosis. In Rattus norvegicus (Rat), this protein is Ceramide-1-phosphate transfer protein (Cptp).